A 403-amino-acid chain; its full sequence is Digeranylgeranylglycerophospholipid reductase 1 (403 aa).

FAD-binding residues include alanine 14, aspartate 33, cysteine 44, alanine 45, glycine 47, arginine 98, valine 122, aspartate 277, glycine 289, and isoleucine 290.

It belongs to the geranylgeranyl reductase family. DGGGPL reductase subfamily. It depends on FAD as a cofactor.

The enzyme catalyses a 2,3-bis-O-phytanyl-sn-glycerol 1-phospholipid + 8 A = a 2,3-bis-O-(geranylgeranyl)-sn-glycerol 1-phospholipid + 8 AH2. It carries out the reaction 2,3-bis-O-(phytanyl)-sn-glycerol 1-phosphate + 8 A = 2,3-bis-O-(geranylgeranyl)-sn-glycerol 1-phosphate + 8 AH2. The catalysed reaction is CDP-2,3-bis-O-(geranylgeranyl)-sn-glycerol + 8 AH2 = CDP-2,3-bis-O-(phytanyl)-sn-glycerol + 8 A. It catalyses the reaction archaetidylserine + 8 AH2 = 2,3-bis-O-phytanyl-sn-glycero-3-phospho-L-serine + 8 A. Its pathway is membrane lipid metabolism; glycerophospholipid metabolism. Functionally, is involved in the reduction of 2,3-digeranylgeranylglycerophospholipids (unsaturated archaeols) into 2,3-diphytanylglycerophospholipids (saturated archaeols) in the biosynthesis of archaeal membrane lipids. Catalyzes the formation of archaetidic acid (2,3-di-O-phytanyl-sn-glyceryl phosphate) from 2,3-di-O-geranylgeranylglyceryl phosphate (DGGGP) via the hydrogenation of each double bond of the isoprenoid chains. Is also probably able to reduce double bonds of geranyl groups in CDP-2,3-bis-O-(geranylgeranyl)-sn-glycerol and archaetidylserine, thus acting at various stages in the biosynthesis of archaeal membrane lipids. This chain is Digeranylgeranylglycerophospholipid reductase 1, found in Methanosphaera stadtmanae (strain ATCC 43021 / DSM 3091 / JCM 11832 / MCB-3).